Consider the following 598-residue polypeptide: Pescadillo homolog (598 aa).

The segment at 296–317 (QAMKADSKDKDDNSNDEAPENV) is disordered. A BRCT domain is found at 345–439 (PTATLFEDFV…ELLSANLYLP (95 aa)). 3 disordered regions span residues 452–501 (DALG…EDVE), 515–544 (GIAY…EDEE), and 564–598 (MKYS…VEKK). Positions 463–485 (ESEDESSDSSEESDSEIENEEED) are enriched in acidic residues. 3 stretches are compositionally biased toward basic and acidic residues: residues 520 to 532 (KAKD…DVAS), 570 to 579 (QKEDKIEELK), and 586 to 598 (AKKE…VEKK). Residues 557–598 (QRKLYKKMKYSNQQKEDKIEELKKKKKQLAKKEKTLKKVEKK) adopt a coiled-coil conformation.

Belongs to the pescadillo family. In terms of assembly, component of the NOP7 complex, composed of ERB1, NOP7 and YTM1. The complex is held together by ERB1, which interacts with NOP7 via its N-terminal domain and with YTM1 via a high-affinity interaction between the seven-bladed beta-propeller domains of the 2 proteins. The NOP7 complex associates with the 66S pre-ribosome.

It localises to the nucleus. The protein resides in the nucleolus. Its subcellular location is the nucleoplasm. Its function is as follows. Component of the NOP7 complex, which is required for maturation of the 25S and 5.8S ribosomal RNAs and formation of the 60S ribosome. The chain is Pescadillo homolog from Candida glabrata (strain ATCC 2001 / BCRC 20586 / JCM 3761 / NBRC 0622 / NRRL Y-65 / CBS 138) (Yeast).